We begin with the raw amino-acid sequence, 94 residues long: Ubiquitin-like protein ATG12B (94 aa).

An N-acetylalanine modification is found at Ala-2. A Glycyl lysine isopeptide (Gly-Lys) (interchain with K-128 in ATG5) cross-link involves residue Gly-94.

Belongs to the ATG12 family. Ubiquitous.

It is found in the cytoplasm. Functionally, ubiquitin-like protein involved in cytoplasm to vacuole transport (Cvt) and autophagy vesicles formation. Conjugation with ATG5 through a ubiquitin-like conjugating system involving also ATG7 as an E1-like activating enzyme and ATG10 as an E2-like conjugating enzyme, is essential for its function. ATG12/ATG5 conjugate has an essential role in plant nutrient recycling. This Arabidopsis thaliana (Mouse-ear cress) protein is Ubiquitin-like protein ATG12B (ATG12B).